Consider the following 540-residue polypeptide: Ecdysone 20-monooxygenase (540 aa).

Residue Cys488 participates in heme binding.

This sequence belongs to the cytochrome P450 family. Heme is required as a cofactor. Strong expression by embryonic stage 10 in epidermis, decreases significantly in older embryos. Third instar larvae show expression in the midgut copper cells, Malpighian tubules and fat body. In the adult ovaries, expression is seen in both nurse cells and centripetally migrating follicle cells.

Its subcellular location is the mitochondrion membrane. It carries out the reaction ecdysone + AH2 + O2 = 20-hydroxyecdysone + A + H2O. It functions in the pathway steroid biosynthesis; ecdysteroid biosynthesis. Required for CNS development; midline glial cells. Involved in the metabolism of insect hormones; responsible for all ecdysone 20-monooxygenase activity during embryonic, larval and adult stages. May be involved in the breakdown of synthetic insecticides. This Drosophila melanogaster (Fruit fly) protein is Ecdysone 20-monooxygenase (shd).